Reading from the N-terminus, the 84-residue chain is Large ribosomal subunit protein bL27 (84 aa).

Residues 1-25 (MSHKKAGGSTRNGRDSNAQRRGVKK) are disordered.

Belongs to the bacterial ribosomal protein bL27 family.

The polypeptide is Large ribosomal subunit protein bL27 (Desulforapulum autotrophicum (strain ATCC 43914 / DSM 3382 / VKM B-1955 / HRM2) (Desulfobacterium autotrophicum)).